A 211-amino-acid chain; its full sequence is Glycerol-3-phosphate acyltransferase (211 aa).

4 helical membrane-spanning segments follow: residues A5–C25, P80–F100, F112–L132, and G138–F158.

The protein belongs to the PlsY family. In terms of assembly, probably interacts with PlsX.

The protein localises to the cell inner membrane. It carries out the reaction an acyl phosphate + sn-glycerol 3-phosphate = a 1-acyl-sn-glycero-3-phosphate + phosphate. It participates in lipid metabolism; phospholipid metabolism. In terms of biological role, catalyzes the transfer of an acyl group from acyl-phosphate (acyl-PO(4)) to glycerol-3-phosphate (G3P) to form lysophosphatidic acid (LPA). This enzyme utilizes acyl-phosphate as fatty acyl donor, but not acyl-CoA or acyl-ACP. This Pectobacterium carotovorum subsp. carotovorum (strain PC1) protein is Glycerol-3-phosphate acyltransferase.